Consider the following 568-residue polypeptide: Proline--tRNA ligase (568 aa).

It belongs to the class-II aminoacyl-tRNA synthetase family. ProS type 1 subfamily. In terms of assembly, homodimer.

Its subcellular location is the cytoplasm. It catalyses the reaction tRNA(Pro) + L-proline + ATP = L-prolyl-tRNA(Pro) + AMP + diphosphate. In terms of biological role, catalyzes the attachment of proline to tRNA(Pro) in a two-step reaction: proline is first activated by ATP to form Pro-AMP and then transferred to the acceptor end of tRNA(Pro). As ProRS can inadvertently accommodate and process non-cognate amino acids such as alanine and cysteine, to avoid such errors it has two additional distinct editing activities against alanine. One activity is designated as 'pretransfer' editing and involves the tRNA(Pro)-independent hydrolysis of activated Ala-AMP. The other activity is designated 'posttransfer' editing and involves deacylation of mischarged Ala-tRNA(Pro). The misacylated Cys-tRNA(Pro) is not edited by ProRS. The chain is Proline--tRNA ligase from Chlamydia pneumoniae (Chlamydophila pneumoniae).